Here is a 383-residue protein sequence, read N- to C-terminus: Succinyl-diaminopimelate desuccinylase (383 aa).

Histidine 73 serves as a coordination point for Zn(2+). The active site involves aspartate 75. Zn(2+) is bound at residue aspartate 107. The active-site Proton acceptor is the glutamate 141. Glutamate 142, glutamate 170, and histidine 356 together coordinate Zn(2+).

The protein belongs to the peptidase M20A family. DapE subfamily. In terms of assembly, homodimer. Zn(2+) serves as cofactor. Requires Co(2+) as cofactor.

The catalysed reaction is N-succinyl-(2S,6S)-2,6-diaminopimelate + H2O = (2S,6S)-2,6-diaminopimelate + succinate. Its pathway is amino-acid biosynthesis; L-lysine biosynthesis via DAP pathway; LL-2,6-diaminopimelate from (S)-tetrahydrodipicolinate (succinylase route): step 3/3. In terms of biological role, catalyzes the hydrolysis of N-succinyl-L,L-diaminopimelic acid (SDAP), forming succinate and LL-2,6-diaminopimelate (DAP), an intermediate involved in the bacterial biosynthesis of lysine and meso-diaminopimelic acid, an essential component of bacterial cell walls. The chain is Succinyl-diaminopimelate desuccinylase from Pseudomonas paraeruginosa (strain DSM 24068 / PA7) (Pseudomonas aeruginosa (strain PA7)).